Reading from the N-terminus, the 176-residue chain is bZIP transcription factor 8 (176 aa).

The interval 44-101 (PNTSGGSDESMSDGSKIDPKRSPKYLEKRMKNNEAAKKSRASRKHREQKNQTENELLK) is disordered. The span at 47-57 (SGGSDESMSDG) shows a compositional bias: low complexity. A compositionally biased stretch (basic and acidic residues) spans 58–80 (SKIDPKRSPKYLEKRMKNNEAAK). In terms of domain architecture, bZIP spans 65–128 (SPKYLEKRMK…AQMQITIRDM (64 aa)). Residues 67–92 (KYLEKRMKNNEAAKKSRASRKHREQK) form a basic motif region. Residues 81 to 90 (KSRASRKHRE) show a composition bias toward basic residues. The span at 91-101 (QKNQTENELLK) shows a compositional bias: basic and acidic residues. The leucine-zipper stretch occupies residues 100–107 (LKRKNAAL).

This sequence belongs to the bZIP family.

The sequence is that of bZIP transcription factor 8 (zip-8) from Caenorhabditis elegans.